The sequence spans 232 residues: Uracil-DNA glycosylase (232 aa).

Asp66 functions as the Proton acceptor in the catalytic mechanism.

The protein belongs to the uracil-DNA glycosylase (UDG) superfamily. UNG family.

The protein resides in the cytoplasm. It carries out the reaction Hydrolyzes single-stranded DNA or mismatched double-stranded DNA and polynucleotides, releasing free uracil.. Its function is as follows. Excises uracil residues from the DNA which can arise as a result of misincorporation of dUMP residues by DNA polymerase or due to deamination of cytosine. The protein is Uracil-DNA glycosylase of Lactobacillus acidophilus (strain ATCC 700396 / NCK56 / N2 / NCFM).